A 130-amino-acid polypeptide reads, in one-letter code: Histone H2A.1 (130 aa).

The interval 1–21 is disordered; it reads MSGGKGKVGSSEKASTSRSAK. S2 is modified (N-acetylserine). 2 positions are modified to N6-acetyllysine: K5 and K7. Q105 is subject to N5-methylglutamine. S127 bears the Phosphoserine mark. The [ST]-Q motif motif lies at 127 to 128; it reads SQ.

This sequence belongs to the histone H2A family. The nucleosome is a histone octamer containing two molecules each of H2A, H2B, H3 and H4 assembled in one H3-H4 heterotetramer and two H2A-H2B heterodimers. The octamer wraps approximately 147 bp of DNA. Post-translationally, phosphorylated to form H2AS128ph (gamma-H2A) in response to DNA double-strand breaks (DSBs) generated by exogenous genotoxic agents and by stalled replication forks. Phosphorylation is dependent on the DNA damage checkpoint kinases MEC1/ATR and TEL1/ATM, spreads on either side of a detected DSB site and may mark the surrounding chromatin for recruitment of proteins required for DNA damage signaling and repair. Gamma-H2A is removed from the DNA prior to the strand invasion-primer extension step of the repair process and subsequently dephosphorylated. Dephosphorylation is necessary for efficient recovery from the DNA damage checkpoint. In terms of processing, acetylated by ESA1 to form H2AK4ac and H2AK7ac.

The protein resides in the nucleus. Its subcellular location is the chromosome. Core component of nucleosome which plays a central role in DNA double strand break (DSB) repair. Nucleosomes wrap and compact DNA into chromatin, limiting DNA accessibility to the cellular machineries which require DNA as a template. Histones thereby play a central role in transcription regulation, DNA repair, DNA replication and chromosomal stability. DNA accessibility is regulated via a complex set of post-translational modifications of histones, also called histone code, and nucleosome remodeling. The protein is Histone H2A.1 (HTA1) of Meyerozyma guilliermondii (strain ATCC 6260 / CBS 566 / DSM 6381 / JCM 1539 / NBRC 10279 / NRRL Y-324) (Yeast).